A 440-amino-acid chain; its full sequence is MSNQGAFEGAANVESGSRVFVYEVVGMRQNEETDQTNYPIRKSGSVFIRVPYNRMNQEMQRITRLGGKIVSIQTVSALQQLNGKTTIATVTDASSETAKSEGNGKATPVKTDSGAKGFAKPPAEEQLKKKDNKGNTMTQAKAKHADVPVNLYRPNAPFIGKVISNEPLVKEGGIGIVQHIKFDLTGGNLKYIEGQSIGIIPPGVDKNGKPEKLRLYSIASTRHGDDVDDKTISLCVRQLEYKHPETGETVYGVCSTYLTHIEPGSEVKITGPVGKEMLLPDDPEANVIMLATGTGIAPMRTYLWRMFKDAERAANPEYQFKGFSWLVFGVPTTPNILYKEELEEIQQKYPDNFRLTYAISREQKNPQGGRMYIQDRVAEHADELWQLIKNEKTHTYICGLRGMEEGIDAALSAAAAKEGVTWSDYQKDLKKAGRWHVETY.

One can recognise a CpcD-like domain in the interval 17–75 (SRVFVYEVVGMRQNEETDQTNYPIRKSGSVFIRVPYNRMNQEMQRITRLGGKIVSIQTV). The tract at residues 93–142 (ASSETAKSEGNGKATPVKTDSGAKGFAKPPAEEQLKKKDNKGNTMTQAKA) is disordered. Positions 122-133 (PAEEQLKKKDNK) are enriched in basic and acidic residues. Residues 155–279 (NAPFIGKVIS…TGPVGKEMLL (125 aa)) enclose the FAD-binding FR-type domain. FAD contacts are provided by residues 214–217 (RLYS), 235–237 (CVR), Y241, 253–255 (VCS), and T294. NADP(+) contacts are provided by S217 and R237. Residues T294, 330–331 (VP), 360–361 (SR), 370–374 (RMYIQ), 399–400 (GL), and E438 contribute to the NADP(+) site.

It belongs to the ferredoxin--NADP reductase type 1 family. It depends on FAD as a cofactor.

The protein resides in the cellular thylakoid membrane. The enzyme catalyses 2 reduced [2Fe-2S]-[ferredoxin] + NADP(+) + H(+) = 2 oxidized [2Fe-2S]-[ferredoxin] + NADPH. The sequence is that of Ferredoxin--NADP reductase (petH) from Trichormus variabilis (strain ATCC 29413 / PCC 7937) (Anabaena variabilis).